Reading from the N-terminus, the 487-residue chain is N-succinylglutamate 5-semialdehyde dehydrogenase (487 aa).

Position 221–226 (221–226) interacts with NAD(+); it reads GSSRTG. Active-site residues include Glu-244 and Cys-278.

This sequence belongs to the aldehyde dehydrogenase family. AstD subfamily.

The catalysed reaction is N-succinyl-L-glutamate 5-semialdehyde + NAD(+) + H2O = N-succinyl-L-glutamate + NADH + 2 H(+). It functions in the pathway amino-acid degradation; L-arginine degradation via AST pathway; L-glutamate and succinate from L-arginine: step 4/5. Functionally, catalyzes the NAD-dependent reduction of succinylglutamate semialdehyde into succinylglutamate. The chain is N-succinylglutamate 5-semialdehyde dehydrogenase from Pseudomonas entomophila (strain L48).